Reading from the N-terminus, the 507-residue chain is Cytochrome P450 4X1 (507 aa).

Residues 14 to 34 (LHLALVFCLALVLMQAVKLYL) traverse the membrane as a helical segment. Heme is bound at residue Cys452.

This sequence belongs to the cytochrome P450 family. Heme serves as cofactor. As to expression, expressed at high levels in brain, mainly in neurons in different regions, including brain stem, hippocampus, cortex and cerebellum. Also expressed in cerebral vasculature. Not detected in kidney, nor liver.

The protein resides in the endoplasmic reticulum membrane. The protein localises to the microsome membrane. It catalyses the reaction N-(5Z,8Z,11Z,14Z-eicosatetraenoyl)-ethanolamine + reduced [NADPH--hemoprotein reductase] + O2 = N-(14,15-epoxy-5Z,8Z,11Z-eicosatrienoyl)-ethanolamine + oxidized [NADPH--hemoprotein reductase] + H2O + H(+). In terms of biological role, a cytochrome P450 monooxygenase that selectively catalyzes the epoxidation of the last double bond of the arachidonoyl moiety of anandamide, potentially modulating endocannabinoid signaling. Has no hydroxylase activity toward various fatty acids, steroids and prostaglandins. Mechanistically, uses molecular oxygen inserting one oxygen atom into a substrate, and reducing the second into a water molecule, with two electrons provided by NADPH via cytochrome P450 reductase (CPR; NADPH-ferrihemoprotein reductase). The protein is Cytochrome P450 4X1 of Rattus norvegicus (Rat).